The following is a 616-amino-acid chain: Dihydroxy-acid dehydratase (616 aa).

Aspartate 81 serves as a coordination point for Mg(2+). Cysteine 122 contacts [2Fe-2S] cluster. Mg(2+)-binding residues include aspartate 123 and lysine 124. An N6-carboxylysine modification is found at lysine 124. Cysteine 195 is a binding site for [2Fe-2S] cluster. Position 491 (glutamate 491) interacts with Mg(2+). The active-site Proton acceptor is the serine 517.

Belongs to the IlvD/Edd family. As to quaternary structure, homodimer. [2Fe-2S] cluster is required as a cofactor. The cofactor is Mg(2+).

It catalyses the reaction (2R)-2,3-dihydroxy-3-methylbutanoate = 3-methyl-2-oxobutanoate + H2O. The catalysed reaction is (2R,3R)-2,3-dihydroxy-3-methylpentanoate = (S)-3-methyl-2-oxopentanoate + H2O. It functions in the pathway amino-acid biosynthesis; L-isoleucine biosynthesis; L-isoleucine from 2-oxobutanoate: step 3/4. It participates in amino-acid biosynthesis; L-valine biosynthesis; L-valine from pyruvate: step 3/4. Functions in the biosynthesis of branched-chain amino acids. Catalyzes the dehydration of (2R,3R)-2,3-dihydroxy-3-methylpentanoate (2,3-dihydroxy-3-methylvalerate) into 2-oxo-3-methylpentanoate (2-oxo-3-methylvalerate) and of (2R)-2,3-dihydroxy-3-methylbutanoate (2,3-dihydroxyisovalerate) into 2-oxo-3-methylbutanoate (2-oxoisovalerate), the penultimate precursor to L-isoleucine and L-valine, respectively. This is Dihydroxy-acid dehydratase from Serratia proteamaculans (strain 568).